Consider the following 477-residue polypeptide: tRNA-2-methylthio-N(6)-dimethylallyladenosine synthase (477 aa).

The 118-residue stretch at Lys3 to Gly120 folds into the MTTase N-terminal domain. Cys12, Cys49, Cys83, Cys157, Cys161, and Cys164 together coordinate [4Fe-4S] cluster. A Radical SAM core domain is found at Lys143–Arg375. A TRAM domain is found at Arg378–Arg441.

It belongs to the methylthiotransferase family. MiaB subfamily. In terms of assembly, monomer. [4Fe-4S] cluster is required as a cofactor.

It is found in the cytoplasm. The enzyme catalyses N(6)-dimethylallyladenosine(37) in tRNA + (sulfur carrier)-SH + AH2 + 2 S-adenosyl-L-methionine = 2-methylsulfanyl-N(6)-dimethylallyladenosine(37) in tRNA + (sulfur carrier)-H + 5'-deoxyadenosine + L-methionine + A + S-adenosyl-L-homocysteine + 2 H(+). Its function is as follows. Catalyzes the methylthiolation of N6-(dimethylallyl)adenosine (i(6)A), leading to the formation of 2-methylthio-N6-(dimethylallyl)adenosine (ms(2)i(6)A) at position 37 in tRNAs that read codons beginning with uridine. The chain is tRNA-2-methylthio-N(6)-dimethylallyladenosine synthase from Pseudoalteromonas atlantica (strain T6c / ATCC BAA-1087).